Reading from the N-terminus, the 183-residue chain is MSRMLNQIPRLITRSFRTSSVGYKATLGPILENKSQIQDLVNKSEWNIVDIIKFSEDEVRNIKIDSRVITKMLRASGLKDSLSEDQKKSLIRGLKLQMIFIKYLYEGDEAEFHKIEESNDDVFRLILSDHKAPKPITLKSLLSSIENLENEVDAEKGEIKSSLDISKLNGNNPTYFTVRSNKE.

The transit peptide at Met1–Tyr23 directs the protein to the mitochondrion.

Belongs to the GatF family. As to quaternary structure, subunit of the heterotrimeric GatFAB amidotransferase (AdT) complex, composed of A, B and F subunits.

It localises to the mitochondrion inner membrane. The enzyme catalyses L-glutamyl-tRNA(Gln) + L-glutamine + ATP + H2O = L-glutaminyl-tRNA(Gln) + L-glutamate + ADP + phosphate + H(+). Functionally, allows the formation of correctly charged Gln-tRNA(Gln) through the transamidation of misacylated Glu-tRNA(Gln) in the mitochondria. The reaction takes place in the presence of glutamine and ATP through an activated gamma-phospho-Glu-tRNA(Gln). Required for proper protein synthesis within the mitochondrion. This chain is Glutamyl-tRNA(Gln) amidotransferase subunit F, mitochondrial, found in Debaryomyces hansenii (strain ATCC 36239 / CBS 767 / BCRC 21394 / JCM 1990 / NBRC 0083 / IGC 2968) (Yeast).